The following is a 353-amino-acid chain: D-alanine--D-alanine ligase A (353 aa).

Residues 141–346 form the ATP-grasp domain; that stretch reads KRLVNEAGLS…YPEIINRLVA (206 aa). 169 to 224 contacts ATP; sequence EQALGLPIFIKPARQGSSVGVHKVVTEADYQAAMSDGFIYDDKLLAEEFIQAREVE. Mg(2+) is bound by residues Asp-300, Glu-313, and Asn-315.

This sequence belongs to the D-alanine--D-alanine ligase family. Mg(2+) is required as a cofactor. The cofactor is Mn(2+).

The protein resides in the cytoplasm. It catalyses the reaction 2 D-alanine + ATP = D-alanyl-D-alanine + ADP + phosphate + H(+). It participates in cell wall biogenesis; peptidoglycan biosynthesis. In terms of biological role, cell wall formation. This chain is D-alanine--D-alanine ligase A, found in Brucella melitensis biotype 1 (strain ATCC 23456 / CCUG 17765 / NCTC 10094 / 16M).